A 448-amino-acid chain; its full sequence is Phosphoglucosamine mutase (448 aa).

S104 (phosphoserine intermediate) is an active-site residue. 4 residues coordinate Mg(2+): S104, D241, D243, and D245. S104 carries the phosphoserine modification.

This sequence belongs to the phosphohexose mutase family. Mg(2+) is required as a cofactor. Post-translationally, activated by phosphorylation.

The catalysed reaction is alpha-D-glucosamine 1-phosphate = D-glucosamine 6-phosphate. Functionally, catalyzes the conversion of glucosamine-6-phosphate to glucosamine-1-phosphate. The protein is Phosphoglucosamine mutase of Nocardioides sp. (strain ATCC BAA-499 / JS614).